The primary structure comprises 493 residues: Glutamate--tRNA ligase (493 aa).

The short motif at 10 to 20 is the 'HIGH' region element; it reads PSPTGDPHVGT. A 'KMSKS' region motif is present at residues 251–255; it reads KLSKR. Residue K254 coordinates ATP.

This sequence belongs to the class-I aminoacyl-tRNA synthetase family. Glutamate--tRNA ligase type 1 subfamily. In terms of assembly, monomer.

The protein localises to the cytoplasm. It carries out the reaction tRNA(Glu) + L-glutamate + ATP = L-glutamyl-tRNA(Glu) + AMP + diphosphate. Catalyzes the attachment of glutamate to tRNA(Glu) in a two-step reaction: glutamate is first activated by ATP to form Glu-AMP and then transferred to the acceptor end of tRNA(Glu). This is Glutamate--tRNA ligase from Pseudomonas syringae pv. syringae (strain B728a).